Consider the following 206-residue polypeptide: Large ribosomal subunit protein uL4 (206 aa).

Residues 42–54 (RRQQGTHQSQGRS) show a composition bias toward polar residues. The interval 42–93 (RRQQGTHQSQGRSDVSRTGAKMFKQKGTGRARHSSARAPQFRGGGKAHGPVV) is disordered. Over residues 64-76 (FKQKGTGRARHSS) the composition is skewed to basic residues.

The protein belongs to the universal ribosomal protein uL4 family. In terms of assembly, part of the 50S ribosomal subunit.

One of the primary rRNA binding proteins, this protein initially binds near the 5'-end of the 23S rRNA. It is important during the early stages of 50S assembly. It makes multiple contacts with different domains of the 23S rRNA in the assembled 50S subunit and ribosome. Its function is as follows. Forms part of the polypeptide exit tunnel. In Bartonella henselae (strain ATCC 49882 / DSM 28221 / CCUG 30454 / Houston 1) (Rochalimaea henselae), this protein is Large ribosomal subunit protein uL4.